Here is a 473-residue protein sequence, read N- to C-terminus: H(+)/Cl(-) exchange transporter ClcA (473 aa).

Topologically, residues 1–32 (MNTDTPTFEAQQVVRLRRGDLIRRLLQRDKTP) are cytoplasmic. Residues 33–69 (LAILLTAAVVGTVTGLIGVAFEKAVTWVQNLRIGALV) traverse the membrane as a helical segment. Residues 70 to 76 (QTADYAI) lie on the Periplasmic side of the membrane. A helical transmembrane segment spans residues 77–100 (LVWPLAFILSALLAMVGYFLVRKF). Over 101–108 (APEAGGSG) the chain is Cytoplasmic. The Selectivity filter part_1 signature appears at 106–110 (GSGIP). Ser107 contributes to the chloride binding site. Positions 109–116 (IPEIEGAL) form an intramembrane region, helical. Over 117–123 (EELRPVR) the chain is Cytoplasmic. A helical transmembrane segment spans residues 124 to 141 (WWRVLPVKFVGGMGTLGA). Over 142 to 147 (GMVLGR) the chain is Periplasmic. A Selectivity filter part_2 motif is present at residues 146-150 (GREGP). Residues 148 to 166 (EGPTVQIGGNIGRMVLDLF) form a helical membrane-spanning segment. At 167 to 176 (RMRSAEARHT) the chain is on the cytoplasmic side. Intramembrane regions (helical) lie at residues 177-189 (LLAT…LSAA) and 193-201 (PLAGILFII). Residues 202–214 (EEMRPQFRYNLIS) lie on the Cytoplasmic side of the membrane. A helical membrane pass occupies residues 215-232 (IKAVFTGVIMSSIVFRIF). Over 233 to 252 (NGEAPIIEVGKLSNAPVNTL) the chain is Periplasmic. A helical membrane pass occupies residues 253 to 281 (WLYLILGMIFGCVGPLFNHLVLRTQDMFQ). At 282 to 287 (RFHGGE) the chain is on the cytoplasmic side. The helical transmembrane segment at 288 to 309 (IKKWVLMGGAIGGLCGILGLIE) threads the bilayer. The Periplasmic portion of the chain corresponds to 310–329 (PEAAGGGFNLIPIAAAGNYS). The helical transmembrane segment at 330-349 (VGLLLFIFIARVLTTLLCFS) threads the bilayer. Residues 350 to 354 (SGAPG) lie on the Cytoplasmic side of the membrane. The Selectivity filter part_3 signature appears at 355–359 (GIFAP). A helical transmembrane segment spans residues 355 to 376 (GIFAPMLALGTLLGTAFGMAAA). Residues Ile356 and Phe357 each contribute to the chloride site. Residues 377–386 (ACFPQYHLEA) lie on the Periplasmic side of the membrane. An intramembrane region (helical) is located at residues 387–401 (GTFAIAGMGALLAAS). The segment at residues 402–404 (VRA) is an intramembrane region (note=Loop between two helices). Positions 405–416 (PLTGIVLVLEMT) form an intramembrane region, helical. The segment at residues 417-421 (DNYQL) is an intramembrane region (note=Loop between two helices). A helical membrane pass occupies residues 422–438 (ILPMIITCLGATLLAQF). The Cytoplasmic portion of the chain corresponds to 439–473 (MGGKPLYSTILARTLAKQDAEQAAKSQRSVAGENT). Tyr445 is a chloride binding site.

This sequence belongs to the chloride channel (TC 2.A.49) family. ClcA subfamily. As to quaternary structure, homodimer.

The protein resides in the cell inner membrane. It carries out the reaction 2 chloride(in) + H(+)(out) = 2 chloride(out) + H(+)(in). Proton-coupled chloride transporter. Functions as antiport system and exchanges two chloride ions for 1 proton. Probably acts as an electrical shunt for an outwardly-directed proton pump that is linked to amino acid decarboxylation, as part of the extreme acid resistance (XAR) response. The sequence is that of H(+)/Cl(-) exchange transporter ClcA from Citrobacter koseri (strain ATCC BAA-895 / CDC 4225-83 / SGSC4696).